The sequence spans 354 residues: Protein RecA (354 aa).

Residue 67 to 74 participates in ATP binding; that stretch reads GPESSGKT.

Belongs to the RecA family.

The protein localises to the cytoplasm. In terms of biological role, can catalyze the hydrolysis of ATP in the presence of single-stranded DNA, the ATP-dependent uptake of single-stranded DNA by duplex DNA, and the ATP-dependent hybridization of homologous single-stranded DNAs. It interacts with LexA causing its activation and leading to its autocatalytic cleavage. This is Protein RecA from Haemophilus influenzae (strain 86-028NP).